A 144-amino-acid polypeptide reads, in one-letter code: MSAITRIIDKIGIVGTIVGSFSCAMCFPAAASLGAAIGLGFLSQWEGLFVQWLIPIFASVALLATLAGWFSHRQWQRTLLGSIGPVLALVGVFGLTHHFLDKDLARVIFYTGLVVMFLVSIWDMVNPANRRCATDGCETPAPRS.

The Cytoplasmic segment spans residues 1–21; it reads MSAITRIIDKIGIVGTIVGSF. The helical transmembrane segment at 22–42 threads the bilayer; that stretch reads SCAMCFPAAASLGAAIGLGFL. The Hg(2+) site is built by cysteine 23 and cysteine 26. Topologically, residues 43 to 46 are periplasmic; the sequence is SQWE. A helical membrane pass occupies residues 47–67; sequence GLFVQWLIPIFASVALLATLA. Residues 68-78 are Cytoplasmic-facing; sequence GWFSHRQWQRT. A helical transmembrane segment spans residues 79-99; that stretch reads LLGSIGPVLALVGVFGLTHHF. Topologically, residues 100–103 are periplasmic; that stretch reads LDKD. A helical transmembrane segment spans residues 104–124; it reads LARVIFYTGLVVMFLVSIWDM. Over 125-144 the chain is Cytoplasmic; sequence VNPANRRCATDGCETPAPRS.

In terms of assembly, monomer.

It is found in the cell inner membrane. Inhibited by the thiol-modifying reagent N-ethylmaleimide (NEM). Involved in mercuric ion uptake. The sequence is that of Mercuric transport protein MerC from Acidithiobacillus ferrooxidans (Thiobacillus ferrooxidans).